Consider the following 147-residue polypeptide: Histidine-containing phosphotransfer protein 1 (147 aa).

Positions alanine 38–methionine 133 constitute an HPt domain. Phosphohistidine is present on histidine 79.

Two-component system major event consists of a His-to-Asp phosphorelay between a sensor histidine kinase (HK) and a response regulator (RR). In plants, the His-to-Asp phosphorelay involves an additional intermediate named Histidine-containing phosphotransfer protein (HPt). This multistep phosphorelay consists of a His-Asp-His-Asp sequential transfer of a phosphate group between first a His and an Asp of the HK protein, followed by the transfer to a conserved His of the HPt protein and finally the transfer to an Asp in the receiver domain of the RR protein. Widely expressed.

It localises to the cytoplasm. The protein resides in the cytosol. The protein localises to the nucleus. In terms of biological role, functions as a two-component phosphorelay mediators between cytokinin sensor histidine kinases and response regulators (B-type ARRs). Plays an important role in propagating cytokinin signal transduction through the multistep His-to-Asp phosphorelay. Functions as a positive regulator of the cytokinin signaling pathway. May play a regulatory role in salt and drought tolerance during plant development. The sequence is that of Histidine-containing phosphotransfer protein 1 from Oryza sativa subsp. japonica (Rice).